The primary structure comprises 303 residues: MTAGQPLRDDPQPRRHSPPALHPAVVPAYPPPESDADESWVWSQIKAEARRDADAEPALASFLYATVLSHPSLDRSLAFHLANKLCSSTLLSTLLYDLFVASLAAHPTLRAAVVADLLAARSRDPACVGFSHCLLNYKGFLAIQAQRVAHVLWAQDRRALALALQSRVAEVFAVDIHPAAAIGKGVLLDHATGVVIGETAVIGDNVSILHHVTLGGTGKAVGDRHPKIGDGVLIGAGATILGNVRIGAGAKIGAGSLVLIDVPPRTTAVGNPARLLGGKKGDDMPGESMDHTSFIQQWSDYSI.

Disordered stretches follow at residues 1-36 and 271-290; these read MTAG…ESDA and NPAR…ESMD.

The protein belongs to the transferase hexapeptide repeat family. In terms of assembly, homomultimer.

The catalysed reaction is L-serine + acetyl-CoA = O-acetyl-L-serine + CoA. Its pathway is amino-acid biosynthesis; L-cysteine biosynthesis; L-cysteine from L-serine: step 1/2. In Oryza sativa subsp. japonica (Rice), this protein is Probable serine acetyltransferase 1 (SAT1).